A 424-amino-acid chain; its full sequence is Glutamyl-tRNA reductase (424 aa).

Substrate-binding positions include 49–52 (TCNR), serine 105, 110–112 (EPQ), and glutamine 116. The active-site Nucleophile is cysteine 50. 185–190 (GSGETA) is an NADP(+) binding site.

It belongs to the glutamyl-tRNA reductase family. As to quaternary structure, homodimer.

The catalysed reaction is (S)-4-amino-5-oxopentanoate + tRNA(Glu) + NADP(+) = L-glutamyl-tRNA(Glu) + NADPH + H(+). The protein operates within porphyrin-containing compound metabolism; protoporphyrin-IX biosynthesis; 5-aminolevulinate from L-glutamyl-tRNA(Glu): step 1/2. Catalyzes the NADPH-dependent reduction of glutamyl-tRNA(Glu) to glutamate 1-semialdehyde (GSA). The chain is Glutamyl-tRNA reductase from Legionella pneumophila (strain Paris).